The following is a 323-amino-acid chain: Lipoyl synthase (323 aa).

Basic and acidic residues predominate over residues 1–14 (MVTILDRTKPDDKR). The segment at 1-25 (MVTILDRTKPDDKRIRHPEKAHKPD) is disordered. [4Fe-4S] cluster contacts are provided by C61, C66, C72, C87, C91, C94, and S300. The 217-residue stretch at 73-289 (WEKKHATFMI…EDIAYTKGFL (217 aa)) folds into the Radical SAM core domain.

The protein belongs to the radical SAM superfamily. Lipoyl synthase family. It depends on [4Fe-4S] cluster as a cofactor.

It is found in the cytoplasm. It catalyses the reaction [[Fe-S] cluster scaffold protein carrying a second [4Fe-4S](2+) cluster] + N(6)-octanoyl-L-lysyl-[protein] + 2 oxidized [2Fe-2S]-[ferredoxin] + 2 S-adenosyl-L-methionine + 4 H(+) = [[Fe-S] cluster scaffold protein] + N(6)-[(R)-dihydrolipoyl]-L-lysyl-[protein] + 4 Fe(3+) + 2 hydrogen sulfide + 2 5'-deoxyadenosine + 2 L-methionine + 2 reduced [2Fe-2S]-[ferredoxin]. It participates in protein modification; protein lipoylation via endogenous pathway; protein N(6)-(lipoyl)lysine from octanoyl-[acyl-carrier-protein]: step 2/2. Functionally, catalyzes the radical-mediated insertion of two sulfur atoms into the C-6 and C-8 positions of the octanoyl moiety bound to the lipoyl domains of lipoate-dependent enzymes, thereby converting the octanoylated domains into lipoylated derivatives. This is Lipoyl synthase from Allorhizobium ampelinum (strain ATCC BAA-846 / DSM 112012 / S4) (Agrobacterium vitis (strain S4)).